The following is a 69-amino-acid chain: Large ribosomal subunit protein bL28 (69 aa).

Belongs to the bacterial ribosomal protein bL28 family.

The protein is Large ribosomal subunit protein bL28 of Oleidesulfovibrio alaskensis (strain ATCC BAA-1058 / DSM 17464 / G20) (Desulfovibrio alaskensis).